A 514-amino-acid chain; its full sequence is Na(+)/H(+) antiporter NhaB (514 aa).

A run of 12 helical transmembrane segments spans residues 23-43 (LALL…PFIA), 63-83 (PLLP…TSAA), 97-117 (LLLM…LFIF), 120-140 (LLLS…AAAF), 144-164 (FLDA…FYGI), 202-222 (LMMH…VGEP), 238-258 (FFLR…LTCM), 303-323 (AVIG…VGLI), 357-377 (LTVF…APII), 391-411 (LFYL…VGTI), 447-467 (ATPN…APLI), and 475-495 (VWMA…CVEF).

Belongs to the NhaB Na(+)/H(+) (TC 2.A.34) antiporter family.

Its subcellular location is the cell inner membrane. It carries out the reaction 2 Na(+)(in) + 3 H(+)(out) = 2 Na(+)(out) + 3 H(+)(in). In terms of biological role, na(+)/H(+) antiporter that extrudes sodium in exchange for external protons. In Salmonella choleraesuis (strain SC-B67), this protein is Na(+)/H(+) antiporter NhaB.